Reading from the N-terminus, the 242-residue chain is Probable transcriptional regulatory protein NMA1902 (242 aa).

Belongs to the TACO1 family.

It is found in the cytoplasm. In Neisseria meningitidis serogroup A / serotype 4A (strain DSM 15465 / Z2491), this protein is Probable transcriptional regulatory protein NMA1902.